We begin with the raw amino-acid sequence, 697 residues long: uncharacterized protein (697 aa).

The next 14 helical transmembrane spans lie at 65-85, 106-126, 131-151, 163-183, 194-214, 227-247, 286-306, 316-336, 361-381, 394-414, 419-439, 450-470, 487-507, and 558-578; these read PVRNFIEEGCDGVTDLYVGIY, CTFRTNNVKLGYLIVDELHNF, YRQSQFGGITNLDFDAFEKAI, DAALQRIGLTGLAKKSMDINE, LSSYPTRMFNLIKEKSKVPLG, TSATTTASINVRTSATTTASI, STNATTTESTNASAKEDANKD, PVTDINKEPYKRKGSQMVLLE, SDEIKHLFLYGIDIYFCPEGV, MFELCVCWAGQKVSYRRMAWE, ERMLRNDEEYKEYLEDIEPYH, SVKRREIYSQIQRNYAWYLAI, QGSQVFRMSGRQIKELYYKVW, and TSAGLQGPQYVKLQFSRHHRQ. The tract at residues 246–321 is disordered; the sequence is SINVRTSATT…NRFHPVTDIN (76 aa). Low complexity predominate over residues 251-298; that stretch reads TSATTTESTNSNTNATTTESTNSSTNATTTASTNSSTNATTTESTNAS. Positions 299–321 are enriched in basic and acidic residues; it reads AKEDANKDGNAEDNRFHPVTDIN.

It localises to the membrane. This is an uncharacterized protein from Saccharomyces cerevisiae (strain ATCC 204508 / S288c) (Baker's yeast).